Here is an 85-residue protein sequence, read N- to C-terminus: U4-theraphotoxin-Hhn1a (85 aa).

Positions 1–22 (MKVTLIAILTCAAVLVLHTTAA) are cleaved as a signal peptide. Positions 23–48 (EELEAESQPMEVGMPDTELAAVDEER) are excised as a propeptide. 3 disulfide bridges follow: cysteine 52–cysteine 66, cysteine 56–cysteine 77, and cysteine 71–cysteine 82.

The protein belongs to the neurotoxin 12 (Hwtx-2) family. 02 (Hwtx-2) subfamily. As to quaternary structure, monomer. As to expression, expressed by the venom gland.

Its subcellular location is the secreted. Functionally, neurotoxin active on both insects and mammals. This chain is U4-theraphotoxin-Hhn1a, found in Cyriopagopus hainanus (Chinese bird spider).